We begin with the raw amino-acid sequence, 168 residues long: Small ribosomal subunit protein uS5 (168 aa).

The S5 DRBM domain maps to leucine 13–valine 76.

It belongs to the universal ribosomal protein uS5 family. In terms of assembly, part of the 30S ribosomal subunit. Contacts proteins S4 and S8.

In terms of biological role, with S4 and S12 plays an important role in translational accuracy. Functionally, located at the back of the 30S subunit body where it stabilizes the conformation of the head with respect to the body. This chain is Small ribosomal subunit protein uS5, found in Shewanella amazonensis (strain ATCC BAA-1098 / SB2B).